Consider the following 266-residue polypeptide: HLA class II histocompatibility antigen, DR beta 3 chain (266 aa).

The N-terminal stretch at 1-29 (MVCLKLPGGSSLAALTVTLMVLSSRLAFA) is a signal peptide. Residues 30 to 124 (GDTRPRFLEL…GESFTVQRRV (95 aa)) are beta-1. Over 30–227 (GDTRPRFLEL…RARSESAQSK (198 aa)) the chain is Extracellular. Disulfide bonds link cysteine 44–cysteine 108 and cysteine 146–cysteine 202. Asparagine 48 carries an N-linked (GlcNAc...) asparagine glycan. Residues 125 to 227 (HPQVTVYPAK…RARSESAQSK (103 aa)) form a beta-2 region. In terms of domain architecture, Ig-like C1-type spans 126 to 214 (PQVTVYPAKT…EHPSVTSALT (89 aa)). A helical transmembrane segment spans residues 228-248 (MLSGVGGFVLGLLFLGAGLFI). The Cytoplasmic portion of the chain corresponds to 249–266 (YFRNQKGHSGLQPTGFLS).

This sequence belongs to the MHC class II family. Heterotrimer that consists of an alpha chain HLA-DRA, a beta chain HLA-DRB1 and a peptide (peptide-MHCII). Newly synthesized alpha and beta chains forms a heterodimer (MHCII) that associates with the CD74/invariant chain (Ii) in the endoplasmic reticulum (ER). Ii is a trimer composed of three subunits and each subunit interacts with one MHCII dimer, blocking the peptide-binding cleft. As a result, MHCII molecules cannot bind peptides present in the ER. The complex of MHCII and CD74/Ii is transported in vesicles from ER to Golgi to lysosomes, where it encounters antigenic peptides generated via proteolysis of endocytosed antigens. MHCII dimers are dissociated from CD74/Ii by the combined action of proteolysis and HLA-DM. Lysosomal enzymes such as cathepsin, degrade CD74/Ii leaving a 24 amino acid remnant called class II-associated Ii or CLIP. Interacts (via the peptide binding cleft) with CLIP; this interaction inhibits antigen peptide binding before entry in the endosomal compartment. The displacement of CLIP and replacement by a high affinity peptide in lysosomes is performed by HLA-DM heterodimer. HLA-DM catalyzes CLIP dissociation from MHCII, stabilizes empty MHCII and mediates the selection of high affinity peptides. Interacts with HLA-DM heterodimer; this interaction is direct. Interacts with TCR (via CDR3). Interacts (via beta-2 domain) with CD4 coreceptor (via Ig-like V-type domain); this interaction is of exceptionally low affinity yet necessary for optimal recognition of antigenic peptides. Post-translationally, ubiquitinated by MARCHF1 and MARCHF8 at Lys-254 leading to sorting into the endosome system and down-regulation of MHC class II. Expressed in professional APCs: monocyte/macrophages, dendritic cells and B cells (at protein level).

It localises to the cell membrane. Its subcellular location is the endoplasmic reticulum membrane. It is found in the lysosome membrane. The protein localises to the late endosome membrane. The protein resides in the autolysosome membrane. Its function is as follows. A beta chain of antigen-presenting major histocompatibility complex class II (MHCII) molecule. In complex with the alpha chain HLA-DRA, displays antigenic peptides on professional antigen presenting cells (APCs) for recognition by alpha-beta T cell receptor (TCR) on HLA-DRB3-restricted CD4-positive T cells. This guides antigen-specific T-helper effector functions, both antibody-mediated immune response and macrophage activation, to ultimately eliminate the infectious agents and transformed cells. Typically presents extracellular peptide antigens of 10 to 30 amino acids that arise from proteolysis of endocytosed antigens in lysosomes. In the tumor microenvironment, presents antigenic peptides that are primarily generated in tumor-resident APCs likely via phagocytosis of apoptotic tumor cells or macropinocytosis of secreted tumor proteins. Presents peptides derived from intracellular proteins that are trapped in autolysosomes after macroautophagy, a mechanism especially relevant for T cell selection in the thymus and central immune tolerance. The selection of the immunodominant epitopes follows two processing modes: 'bind first, cut/trim later' for pathogen-derived antigenic peptides and 'cut first, bind later' for autoantigens/self-peptides. The anchor residue at position 1 of the peptide N-terminus, usually a large hydrophobic residue, is essential for high affinity interaction with MHCII molecules. In terms of biological role, ALLELE DRB3*01:01: Exclusively presents several immunogenic epitopes derived from C.tetani neurotoxin tetX, playing a significant role in immune recognition and long-term protection. Presents viral epitopes derived from HHV-6B U11, TRX2/U56 and U85 antigens to polyfunctional CD4-positive T cells with cytotoxic activity implicated in control of HHV-6B infection. ALLELE DRB3*02:02 Exclusively presents several immunogenic epitopes derived from C.tetani neurotoxin tetX, playing a significant role in immune recognition and long-term protection. Upon EBV infection, presents to CD4-positive T cells latent antigen EBNA2 (PRSPTVFYNIPPMPLPPSQL) and lytic antigen BZLF1 (LTAYHVSTAPTGSWF) peptides, driving oligoclonal expansion and selection of virus-specific memory T cell subsets with cytotoxic potential to directly eliminate virus-infected B cells. Presents viral epitopes derived from HHV-6B U11, gB/U39 and gH/U48 antigens to polyfunctional CD4-positive T cells with cytotoxic activity implicated in control of HHV-6B infection. Plays a minor role in CD4-positive T cell immune response against Dengue virus by presenting conserved peptides from capsid and non-structural NS3 proteins. Displays peptides derived from IAV matrix protein M, implying a role in protection against IAV infection. In the context of tumor immunesurveillance, may present to T-helper 1 cells an immunogenic epitope derived from tumor-associated antigen WT1 (KRYFKLSHLQMHSRKH), likely providing for effective antitumor immunity in a wide range of solid and hematological malignancies. Presents to Vbeta2-positive T-helper 1 cells specifically an immunodominant peptide derived from tumor antigen CTAG1A/NY-ESO-1(PGVLLKEFTVSGNILTIRLTAADHR) and confers protective memory response. In metastatic epithelial tumors, presents to intratumoral CD4-positive T cells a TP53 neoantigen (HYNYMCNSSCMGSMNRRPILTIITL) carrying G245S hotspot driver mutation and may mediate tumor regression. Functionally, ALLELE DRB3*03:01: Presents a series of conserved peptides derived from the M.tuberculosis PPE family of proteins, in particular PPE29 and PPE33, known to be highly immunogenic. Presents immunogenic epitopes derived from C.tetani neurotoxin tetX, playing a role in immune recognition and long-term protection. Displays immunodominant viral peptides from HCV non-structural protein NS2, as part of a broad range T-helper response to resolve infection. This is HLA class II histocompatibility antigen, DR beta 3 chain (HLA-DRB3) from Homo sapiens (Human).